A 953-amino-acid chain; its full sequence is MSDKIIDFSKIEKDILKFWTENKIFELCNKLSQGREEYVFFDGPPFATGLPHYGHILSGTIKDIIGRFYYQKGFHVERRFGWDCHGLPVEYEIDKKFNITDRNQILKMGIDVYNHECRKIVQKYTNEWEETVIRMGRWVDFKGSYKTMDLEFMESIWFIFKELFKRNKIYRGFKIMPFSTACKTALSNFEASQNYKNVSDPSVLVTFKIINPKDVLHNYENNDIEIFFVAWTTTPWTLPANCALVINPDYEYAIFYINNNSKKLYIMLKNRIEVYFKQFCITTVILGKELIGVSYATLFNYYENYITRGFFKTIGGNFVTITDGSGIVHTAPAFGEEDYNIFLKLGLLKPDEIPPCHIDENGKFTIAMEKYVNVPINNDISLNGVYFKDADKIILQILKPHLIYNSRIVHSYPFCWRSDTPLLYKLIPNWFVKITDIREELLTQNKKINWIPETIKYKRFQNWLSNAKDWAISRNRFWGTPLPIWARYENEIYNYTDLICVGSIKELEDLTNTKITDLHREHIDQLLIEHNGKTYKRIEDVLDCWFESGSMPYAQNHLKGIKVNNSLIDKLDNINLNNAYLIKENFPADFIGEGLDQTRGWFYTLHVISTILFNSPAFKNVIVNGIVLAEDGKKMSKRLKNYPDPMNIFNKYGADALRMYLISSPVVEAENLRFNENGVKEILKTLLIPWYNTLVFYKECQIQNHNHTLLLDAWIESELNILINKVNIDMSEYKLNNILNYALDFIENLNNWYIRINRKELKNNGLYLKTIIKRFSIVMSAFVPFFSDYSYQIVCSDKISVHLEMIPEYKSINSDFNFIKCIIDGIRHLREKYKLKLKKTLKEVIIVLDNININKNLFEKYEAVIKSECNTLDIILNDINDYSISTIIKPNFKELNKNKNVIKEKLDIISKLTVNDIENIKNGTHDININELLIETYIKDIEYSGVFITLELF.

Positions 45-55 (PFATGLPHYGH) match the 'HIGH' region motif. Positions 634–638 (KMSKR) match the 'KMSKS' region motif. Lys637 serves as a coordination point for ATP.

It belongs to the class-I aminoacyl-tRNA synthetase family.

Its subcellular location is the cytoplasm. The enzyme catalyses tRNA(Ile) + L-isoleucine + ATP = L-isoleucyl-tRNA(Ile) + AMP + diphosphate. The polypeptide is Probable isoleucine--tRNA ligase, cytoplasmic (Enterocytozoon bieneusi (strain H348) (Microsporidian parasite)).